We begin with the raw amino-acid sequence, 118 residues long: Cytochrome b-c1 complex subunit 7 (118 aa).

The tract at residues 1-32 is igE-binding. Immunodominant epitope; induces specific IgE antibody production in mice. Causes degranulation of rat basophilic leukemia (RBL) cells and the release of beta-hexosaminidase from them; it reads MVHLTKTLRFINNPGFRKFYYGLQGYNKYGLY.

This sequence belongs to the UQCRB/QCR7 family. Component of the ubiquinol-cytochrome c oxidoreductase (cytochrome b-c1 complex, complex III, CIII), a multisubunit enzyme composed of 3 respiratory subunits cytochrome b, cytochrome c1 and Rieske protein, 2 core protein subunits, and additional low-molecular weight protein subunits. The complex exists as an obligatory dimer and forms supercomplexes (SCs) in the inner mitochondrial membrane with cytochrome c oxidase (complex IV, CIV).

It is found in the mitochondrion inner membrane. Component of the ubiquinol-cytochrome c oxidoreductase, a multisubunit transmembrane complex that is part of the mitochondrial electron transport chain which drives oxidative phosphorylation. The respiratory chain contains 3 multisubunit complexes succinate dehydrogenase (complex II, CII), ubiquinol-cytochrome c oxidoreductase (cytochrome b-c1 complex, complex III, CIII) and cytochrome c oxidase (complex IV, CIV), that cooperate to transfer electrons derived from NADH and succinate to molecular oxygen, creating an electrochemical gradient over the inner membrane that drives transmembrane transport and the ATP synthase. The cytochrome b-c1 complex catalyzes electron transfer from ubiquinol to cytochrome c, linking this redox reaction to translocation of protons across the mitochondrial inner membrane, with protons being carried across the membrane as hydrogens on the quinol. In the process called Q cycle, 2 protons are consumed from the matrix, 4 protons are released into the intermembrane space and 2 electrons are passed to cytochrome c. This Dermatophagoides pteronyssinus (European house dust mite) protein is Cytochrome b-c1 complex subunit 7.